Consider the following 261-residue polypeptide: Tryptophan synthase alpha chain (261 aa).

Active-site proton acceptor residues include glutamate 47 and aspartate 58.

This sequence belongs to the TrpA family. Tetramer of two alpha and two beta chains.

It catalyses the reaction (1S,2R)-1-C-(indol-3-yl)glycerol 3-phosphate + L-serine = D-glyceraldehyde 3-phosphate + L-tryptophan + H2O. It participates in amino-acid biosynthesis; L-tryptophan biosynthesis; L-tryptophan from chorismate: step 5/5. In terms of biological role, the alpha subunit is responsible for the aldol cleavage of indoleglycerol phosphate to indole and glyceraldehyde 3-phosphate. This is Tryptophan synthase alpha chain from Neisseria meningitidis serogroup A / serotype 4A (strain DSM 15465 / Z2491).